A 60-amino-acid polypeptide reads, in one-letter code: UPF0434 protein Pnap_1922 (60 aa).

It belongs to the UPF0434 family.

This chain is UPF0434 protein Pnap_1922, found in Polaromonas naphthalenivorans (strain CJ2).